An 88-amino-acid chain; its full sequence is MVSKQKIEELVKKFGRNAKDTGHLPVQIAILTEKIESLKKHFEANKKDLHSMRGFIAKVNHRKALLSHLKSSNYELYLETIKALNIRK.

Belongs to the universal ribosomal protein uS15 family. In terms of assembly, part of the 30S ribosomal subunit. Forms a bridge to the 50S subunit in the 70S ribosome, contacting the 23S rRNA.

One of the primary rRNA binding proteins, it binds directly to 16S rRNA where it helps nucleate assembly of the platform of the 30S subunit by binding and bridging several RNA helices of the 16S rRNA. Functionally, forms an intersubunit bridge (bridge B4) with the 23S rRNA of the 50S subunit in the ribosome. The chain is Small ribosomal subunit protein uS15 from Metamycoplasma arthritidis (strain 158L3-1) (Mycoplasma arthritidis).